We begin with the raw amino-acid sequence, 858 residues long: MSVVGLDVGSQSCYIAVARAGGIETIANEFSDRCTPSVISFGPKNRTIGVAAKNQQITHANNTVSSFKRFHGRAFSDPFIQKEKESLSYDLVPMKNGGVGIKVMYMDEEHLFSVEQITAMLLTKLKETAENNLKKPVTDCVISVPSFFTDAERRSVLDAAQIVGLNCLRLMNDMTAVALNYGIYKQDLPNADEKPQGSGVCGHGPSSFQVSACAFNKGKLKVLGTAFDPFLGGKNFDEKLVEHFCAEFKTKYKLDAKSKIRALLRLHQECEKLKKLMSSNSTDLPLNIECFMNDKDVSAKMNRSQFEELCAELLQKIEVPLHSLMEQTHLKTEDVSAIEIVGGATRIPAVKERIAKFFGKDVSTTLNADEAVARGCALQCAILSPAFKVREFSVTDAVPFPISLVWNHDSEETEGVHEVFSRNHAAPFSKVLTFLRRGPFELEAFYSDPQGVPYPEAKIGRFVVQNVSAQKDGEKSKVKVKVRVNTHGIFTISTASMVEKVPTEEDDGSSVEADMECPNQKPAESSDVDKNSQQDNSEAGTQPQVQTDGQQTSQSPPSPELPSEENKIPDADKANEKKVDQPPEAKKPKIKVVNVELPVEANLVWQLGRDLLNMYIETEGKMIMQDKLEKERNDAKNAVEECVYEFRDKLCGPYEKFICQQEHEKFLRLLTETEDWLYEEGEDQAKQAYIDKLEELMKMGNPVKVRFQEAEERPKVLEELGQRLQHYAKIAADFRSKDEKYNHIDESEMKKVEKSVNEVMEWMNNVMNAQAKRSLDQDPVVRTHEIRAKVKELNNVCEPVVNQPKPKIESPKLERTPNGPNLDKKEDLEGKDNFGAEAPHQNGECHPNEKGSVNMDLD.

The residue at position 2 (S2) is an N-acetylserine. An N6-acetyllysine modification is found at K471. 2 disordered regions span residues 500–585 (KVPT…PPEA) and 801–858 (VNQP…MDLD). Residues 504–515 (EEDDGSSVEADM) are compositionally biased toward acidic residues. Phosphoserine occurs at positions 509 and 510. A compositionally biased stretch (polar residues) spans 533–549 (QQDNSEAGTQPQVQTDG). A Phosphoserine modification is found at S558. Composition is skewed to basic and acidic residues over residues 564 to 585 (EENK…PPEA) and 806 to 815 (PKIESPKLER). The residue at position 810 (S810) is a Phosphoserine. Phosphothreonine is present on T816. The segment covering 822–834 (LDKKEDLEGKDNF) has biased composition (basic and acidic residues).

Belongs to the heat shock protein 70 family. In terms of assembly, interacts with HSPA8/HSC70. Interacts with HSPA1A (via NBD) and HSPA1B (via NBD). In terms of processing, phosphorylation on Ser-509 may be important for regulation of the HSPA8/HSC70 chaperone activity. In terms of tissue distribution, predominantly expressed in the brain and also found in the liver.

The protein resides in the cytoplasm. Its function is as follows. Acts as a nucleotide-exchange factor (NEF) for chaperone proteins HSPA1A and HSPA1B, promoting the release of ADP from HSPA1A/B thereby triggering substrate release. Prevents the aggregation of denatured proteins in cells under severe stress, on which the ATP levels decrease markedly. Inhibits HSPA8/HSC70 ATPase and chaperone activities. The sequence is that of Heat shock protein 105 kDa (HSPH1) from Cricetulus griseus (Chinese hamster).